Consider the following 508-residue polypeptide: Histidine ammonia-lyase (508 aa).

The 5-imidazolinone (Ala-Gly) cross-link spans 143-145 (ASG). Residue Ser144 is modified to 2,3-didehydroalanine (Ser).

The protein belongs to the PAL/histidase family. Contains an active site 4-methylidene-imidazol-5-one (MIO), which is formed autocatalytically by cyclization and dehydration of residues Ala-Ser-Gly.

It is found in the cytoplasm. The enzyme catalyses L-histidine = trans-urocanate + NH4(+). It functions in the pathway amino-acid degradation; L-histidine degradation into L-glutamate; N-formimidoyl-L-glutamate from L-histidine: step 1/3. This is Histidine ammonia-lyase from Caldanaerobacter subterraneus subsp. tengcongensis (strain DSM 15242 / JCM 11007 / NBRC 100824 / MB4) (Thermoanaerobacter tengcongensis).